The chain runs to 231 residues: Large ribosomal subunit protein uL1 (231 aa).

This sequence belongs to the universal ribosomal protein uL1 family. Part of the 50S ribosomal subunit.

Functionally, binds directly to 23S rRNA. The L1 stalk is quite mobile in the ribosome, and is involved in E site tRNA release. Protein L1 is also a translational repressor protein, it controls the translation of the L11 operon by binding to its mRNA. In Methylococcus capsulatus (strain ATCC 33009 / NCIMB 11132 / Bath), this protein is Large ribosomal subunit protein uL1.